The primary structure comprises 156 residues: N-glycosidase Npun_R5314 (156 aa).

Belongs to the YbiA family.

The enzyme catalyses 2,5-diamino-6-hydroxy-4-(5-phosphoribosylamino)-pyrimidine + H2O = 2,5,6-triamino-4-hydroxypyrimidine + D-ribose 5-phosphate. It carries out the reaction 5-amino-6-(5-phospho-D-ribosylamino)uracil + H2O = 5,6-diaminouracil + D-ribose 5-phosphate. Its function is as follows. Catalyzes the hydrolysis of the N-glycosidic bond in the first two intermediates of riboflavin biosynthesis, which are highly reactive metabolites, yielding relatively innocuous products. Thus, can divert a surplus of harmful intermediates into relatively harmless products and pre-empt the damage these intermediates would otherwise do. May act on other substrates in vivo. Has no activity against GTP, nucleoside monophosphates or ADP-ribose. In Nostoc punctiforme (strain ATCC 29133 / PCC 73102), this protein is N-glycosidase Npun_R5314.